The sequence spans 310 residues: Syndecan-1 (310 aa).

The N-terminal stretch at 1–22 (MRRAALWLWLCALALSLQPALP) is a signal peptide. Over 23–254 (QIVATNLPPE…GLLDRKEVLG (232 aa)) the chain is Extracellular. Disordered stretches follow at residues 27-100 (TNLP…EGPK) and 114-212 (LTAR…QDFT). The span at 32 to 42 (EDQDGSGDDSD) shows a compositional bias: acidic residues. O-linked (Xyl...) (chondroitin sulfate) serine glycosylation is present at S37. N43 is a glycosylation site (N-linked (GlcNAc...) asparagine). Residues S45 and S47 are each glycosylated (O-linked (Xyl...) (heparan sulfate) serine). Over residues 55-75 (ITLSQQTPSTWKDTQLLTAIP) the composition is skewed to polar residues. Basic and acidic residues predominate over residues 117–127 (REQEATPRPRE). The segment covering 128-151 (TTQLPTTHLASTTTATTAQEPATS) has biased composition (low complexity). Basic and acidic residues predominate over residues 153 to 164 (PHRDMQPGHHET). Residues S206 and S216 are each glycosylated (O-linked (Xyl...) (chondroitin sulfate) serine). The helical transmembrane segment at 255–275 (GVIAGGLVGLIFAVCLVGFML) threads the bilayer. At 276–310 (YRMKKKDEGSYSLEEPKQANGGAYQKPTKQEEFYA) the chain is on the cytoplasmic side. Positions 284 to 310 (GSYSLEEPKQANGGAYQKPTKQEEFYA) are disordered. Residue S285 is modified to Phosphoserine.

This sequence belongs to the syndecan proteoglycan family. In terms of assembly, interacts with CDCP1. Interacts (via C-terminus) with TIAM1 (via PDZ domain). Interacts with MDK. Shedding is enhanced by a number of factors such as heparanase, thrombin or EGF. Also by stress and wound healing. PMA-mediated shedding is inhibited by TIMP3. In terms of tissue distribution, detected in placenta (at protein level). Detected in fibroblasts (at protein level).

It localises to the membrane. The protein resides in the secreted. Its subcellular location is the extracellular exosome. Cell surface proteoglycan that contains both heparan sulfate and chondroitin sulfate and that links the cytoskeleton to the interstitial matrix. Regulates exosome biogenesis in concert with SDCBP and PDCD6IP. Able to induce its own expression in dental mesenchymal cells and also in the neighboring dental epithelial cells via an MSX1-mediated pathway. The polypeptide is Syndecan-1 (Homo sapiens (Human)).